The chain runs to 413 residues: 1-deoxy-D-xylulose 5-phosphate reductoisomerase (413 aa).

Residues Thr28, Gly29, Ser30, Ile31, Gly54, Arg55, Asn56, and Asn142 each coordinate NADPH. 1-deoxy-D-xylulose 5-phosphate is bound at residue Lys143. Residue Glu144 coordinates NADPH. Asp168 lines the Mn(2+) pocket. 1-deoxy-D-xylulose 5-phosphate-binding residues include Ser169, Glu170, Ser194, and His217. A Mn(2+)-binding site is contributed by Glu170. Gly223 is a binding site for NADPH. 4 residues coordinate 1-deoxy-D-xylulose 5-phosphate: Ser230, Asn235, Lys236, and Glu239. A Mn(2+)-binding site is contributed by Glu239.

Belongs to the DXR family. Mg(2+) is required as a cofactor. The cofactor is Mn(2+).

The catalysed reaction is 2-C-methyl-D-erythritol 4-phosphate + NADP(+) = 1-deoxy-D-xylulose 5-phosphate + NADPH + H(+). It functions in the pathway isoprenoid biosynthesis; isopentenyl diphosphate biosynthesis via DXP pathway; isopentenyl diphosphate from 1-deoxy-D-xylulose 5-phosphate: step 1/6. Functionally, catalyzes the NADPH-dependent rearrangement and reduction of 1-deoxy-D-xylulose-5-phosphate (DXP) to 2-C-methyl-D-erythritol 4-phosphate (MEP). This chain is 1-deoxy-D-xylulose 5-phosphate reductoisomerase, found in Thermosynechococcus vestitus (strain NIES-2133 / IAM M-273 / BP-1).